Reading from the N-terminus, the 342-residue chain is Holliday junction branch migration complex subunit RuvB (342 aa).

Residues Met-1–Tyr-179 are large ATPase domain (RuvB-L). ATP contacts are provided by residues Leu-18, Arg-19, Gly-60, Lys-63, Thr-64, Thr-65, Glu-126–Phe-128, Arg-169, Tyr-179, and Arg-216. Thr-64 is a binding site for Mg(2+). Residues Asn-180–Glu-250 are small ATPAse domain (RuvB-S). Residues Ile-253–Glu-342 are head domain (RuvB-H). DNA contacts are provided by Arg-289, Arg-308, and Arg-313.

The protein belongs to the RuvB family. As to quaternary structure, homohexamer. Forms an RuvA(8)-RuvB(12)-Holliday junction (HJ) complex. HJ DNA is sandwiched between 2 RuvA tetramers; dsDNA enters through RuvA and exits via RuvB. An RuvB hexamer assembles on each DNA strand where it exits the tetramer. Each RuvB hexamer is contacted by two RuvA subunits (via domain III) on 2 adjacent RuvB subunits; this complex drives branch migration. In the full resolvosome a probable DNA-RuvA(4)-RuvB(12)-RuvC(2) complex forms which resolves the HJ.

The protein localises to the cytoplasm. The enzyme catalyses ATP + H2O = ADP + phosphate + H(+). Its function is as follows. The RuvA-RuvB-RuvC complex processes Holliday junction (HJ) DNA during genetic recombination and DNA repair, while the RuvA-RuvB complex plays an important role in the rescue of blocked DNA replication forks via replication fork reversal (RFR). RuvA specifically binds to HJ cruciform DNA, conferring on it an open structure. The RuvB hexamer acts as an ATP-dependent pump, pulling dsDNA into and through the RuvAB complex. RuvB forms 2 homohexamers on either side of HJ DNA bound by 1 or 2 RuvA tetramers; 4 subunits per hexamer contact DNA at a time. Coordinated motions by a converter formed by DNA-disengaged RuvB subunits stimulates ATP hydrolysis and nucleotide exchange. Immobilization of the converter enables RuvB to convert the ATP-contained energy into a lever motion, pulling 2 nucleotides of DNA out of the RuvA tetramer per ATP hydrolyzed, thus driving DNA branch migration. The RuvB motors rotate together with the DNA substrate, which together with the progressing nucleotide cycle form the mechanistic basis for DNA recombination by continuous HJ branch migration. Branch migration allows RuvC to scan DNA until it finds its consensus sequence, where it cleaves and resolves cruciform DNA. The polypeptide is Holliday junction branch migration complex subunit RuvB (Rickettsia bellii (strain RML369-C)).